A 463-amino-acid polypeptide reads, in one-letter code: Autophagy-related protein 36 (463 aa).

An RING-type; atypical zinc finger spans residues 5-45 (CSICLEVLVDKEAFTEPCLHYYHNECIKEWTKRANTCPKCR). The segment at 85 to 131 (TNLCALCEDPSTSLIYCESCGGSFHFNCIGIGDELDSEWCCPLCGMF) adopts a PHD-type zinc-finger fold. Residues 229-242 (TQNSQSSEFSTENN) show a composition bias toward polar residues. Residues 229–281 (TQNSQSSEFSTENNVVPLKNTHELGRKLKKPRRASGIKKNVVERSSSHQSTQI) form a disordered region. Residues 255-264 (KLKKPRRASG) show a composition bias toward basic residues.

In terms of assembly, interacts with ATG28.

Its function is as follows. Micropexophagy-specific protein required for efficient micropexophagic apparatus (MIPA) formation but not for general autophagy. The sequence is that of Autophagy-related protein 36 (ATG35) from Komagataella phaffii (strain GS115 / ATCC 20864) (Yeast).